We begin with the raw amino-acid sequence, 352 residues long: Molybdenum import ATP-binding protein ModC (352 aa).

The 229-residue stretch at 1–229 (MLELNFSQTL…SVMNPWLPKE (229 aa)) folds into the ABC transporter domain. 31 to 38 (GVSGAGKT) is an ATP binding site. In terms of domain architecture, Mop spans 289–352 (QTSIRNVLRA…AQIKSVSITA (64 aa)).

Belongs to the ABC transporter superfamily. Molybdate importer (TC 3.A.1.8) family. In terms of assembly, the complex is composed of two ATP-binding proteins (ModC), two transmembrane proteins (ModB) and a solute-binding protein (ModA).

Its subcellular location is the cell inner membrane. It carries out the reaction molybdate(out) + ATP + H2O = molybdate(in) + ADP + phosphate + H(+). Part of the ABC transporter complex ModABC involved in molybdenum import. Responsible for energy coupling to the transport system. The sequence is that of Molybdenum import ATP-binding protein ModC from Shigella flexneri.